A 590-amino-acid polypeptide reads, in one-letter code: Aspartate--tRNA(Asp/Asn) ligase (590 aa).

Glutamate 173 serves as a coordination point for L-aspartate. The aspartate stretch occupies residues 197–200 (QIFK). An L-aspartate-binding site is contributed by arginine 219. ATP-binding positions include 219-221 (RDE) and glutamine 228. Histidine 450 serves as a coordination point for L-aspartate. An ATP-binding site is contributed by glutamate 484. An L-aspartate-binding site is contributed by arginine 491. Residue 536-539 (GLDR) coordinates ATP.

It belongs to the class-II aminoacyl-tRNA synthetase family. Type 1 subfamily. In terms of assembly, homodimer.

The protein resides in the cytoplasm. The catalysed reaction is tRNA(Asx) + L-aspartate + ATP = L-aspartyl-tRNA(Asx) + AMP + diphosphate. In terms of biological role, aspartyl-tRNA synthetase with relaxed tRNA specificity since it is able to aspartylate not only its cognate tRNA(Asp) but also tRNA(Asn). Reaction proceeds in two steps: L-aspartate is first activated by ATP to form Asp-AMP and then transferred to the acceptor end of tRNA(Asp/Asn). This chain is Aspartate--tRNA(Asp/Asn) ligase, found in Coxiella burnetii (strain RSA 493 / Nine Mile phase I).